We begin with the raw amino-acid sequence, 468 residues long: MTSVITSRARHVAVIGLGAAGLVAVRELRREGHTVIGFEREKHVGGLWVYTDRVDSDSVSVDPDRTIVHSSIYQSLRTNLPRECMGYSDFPFVTRSSDGDPRRYPDHREVLMYLQDFAKEFKIEDMIRFETEVLCVEPSPENNRKWRVQFKSSNGVSGEEIFDAVVVCNGHFTEPRLAHIPGIESWPGKQIHSHNYRIPDPFKDEVVIVIGSQASGNDISTDIATIAKEVHISSKMVASDSYGCYDNLRIHPTIYRAREDGSVVFRNGKVVFADAIVHCTGYKYHFPFLKTSGYVTVEDNRVGPLYKHVFPPALAPGISFIGLPFMGLQFFMFEIQSKWVASVLSGRVKLPAEDKMMEEAVAFYSKLEDLGIPKRYTHFLTDPRGNPMLGTFKPEDAVVISQSDYFNWIAKQCGCTSIERWRERLYNVAIKKVFFGGDSYRDRWDDDQLIEEVYREFAKLKPNQDCSS.

16-21 (GLGAAG) is an FAD binding site. 211 to 216 (GSQASG) is an NADP(+) binding site.

Belongs to the FMO family. FAD serves as cofactor.

Catalyzes the conversion of methylthioalkyl glucosinolates of any chain length into methylsulfinylalkyl glucosinolates. The chain is Flavin-containing monooxygenase FMO GS-OX-like 1 from Arabidopsis thaliana (Mouse-ear cress).